A 376-amino-acid chain; its full sequence is MDPVPLFNPCEMGRFTFSHRIVLAPLTRARSYGNLPQSHAILYYSQRATKGGLLISEATGVSSDAPCTNTPGIWTKEQVEAWKPVVDAVHAKGGIFFCQIWHVGRASDLEQEPISSTDKPVEKNEDMDFPVPRRLAVEEIPDVINHFRIAARNAIDAGFDGVEVHGAHGFLLEQFMKDGVNDRADEYGGSLQNRCRFALEVIDAVSTEVGPDRVGFRISPYISYYGCHDSDPDALGVYMARELDRRGVLYCSAVEPEMVAATTVVDGETTTTTMSRRMMIPHRLHGMREAFRRGMFMVGGGYDRDAGNMAVASGYADMVVFGRLFLANPDLPRRFQLDAPLNKYDRATFYTHDPVVGYTDYPFLDDDREAMSDHTG.

Residues 25–27 (PLT), Ala58, and Gln99 each bind FMN. 165–168 (HGAH) contacts substrate. FMN-binding positions include Arg217, Gly301, and 322–323 (GR).

It belongs to the NADH:flavin oxidoreductase/NADH oxidase family. FMN is required as a cofactor.

In terms of biological role, putative oxophytodienoate reductase that may be involved in the biosynthesis or metabolism of oxylipin signaling molecules. In Oryza sativa subsp. japonica (Rice), this protein is Putative 12-oxophytodienoate reductase 13 (OPR13).